A 589-amino-acid chain; its full sequence is 2-succinyl-5-enolpyruvyl-6-hydroxy-3-cyclohexene-1-carboxylate synthase (589 aa).

The tract at residues 198 to 222 (DAATTEGAHDSHAPSQPTRGPRKLP) is disordered.

The protein belongs to the TPP enzyme family. MenD subfamily. As to quaternary structure, homodimer. It depends on Mg(2+) as a cofactor. The cofactor is Mn(2+). Thiamine diphosphate is required as a cofactor.

It catalyses the reaction isochorismate + 2-oxoglutarate + H(+) = 5-enolpyruvoyl-6-hydroxy-2-succinyl-cyclohex-3-ene-1-carboxylate + CO2. It functions in the pathway quinol/quinone metabolism; 1,4-dihydroxy-2-naphthoate biosynthesis; 1,4-dihydroxy-2-naphthoate from chorismate: step 2/7. It participates in quinol/quinone metabolism; menaquinone biosynthesis. Functionally, catalyzes the thiamine diphosphate-dependent decarboxylation of 2-oxoglutarate and the subsequent addition of the resulting succinic semialdehyde-thiamine pyrophosphate anion to isochorismate to yield 2-succinyl-5-enolpyruvyl-6-hydroxy-3-cyclohexene-1-carboxylate (SEPHCHC). In Corynebacterium jeikeium (strain K411), this protein is 2-succinyl-5-enolpyruvyl-6-hydroxy-3-cyclohexene-1-carboxylate synthase.